Here is a 251-residue protein sequence, read N- to C-terminus: tRNA-uridine aminocarboxypropyltransferase 2 (251 aa).

Residues Cys23, Cys26, Cys33, and Cys35 each coordinate Zn(2+). Positions 131–134 (DGTW) match the DXTW motif.

It belongs to the TDD superfamily. DTWD2 family.

It carries out the reaction a uridine in tRNA + S-adenosyl-L-methionine = a 3-[(3S)-3-amino-3-carboxypropyl]uridine in tRNA + S-methyl-5'-thioadenosine + H(+). Its function is as follows. Catalyzes the formation of 3-(3-amino-3-carboxypropyl)uridine (acp3U) at position 20a in the D-loop of several cytoplasmic tRNAs (acp3U(20a)). The sequence is that of tRNA-uridine aminocarboxypropyltransferase 2 from Drosophila melanogaster (Fruit fly).